The sequence spans 237 residues: Ribonuclease PH (237 aa).

Phosphate contacts are provided by residues R86 and 124–126 (GTR).

It belongs to the RNase PH family. In terms of assembly, homohexameric ring arranged as a trimer of dimers.

It catalyses the reaction tRNA(n+1) + phosphate = tRNA(n) + a ribonucleoside 5'-diphosphate. Phosphorolytic 3'-5' exoribonuclease that plays an important role in tRNA 3'-end maturation. Removes nucleotide residues following the 3'-CCA terminus of tRNAs; can also add nucleotides to the ends of RNA molecules by using nucleoside diphosphates as substrates, but this may not be physiologically important. Probably plays a role in initiation of 16S rRNA degradation (leading to ribosome degradation) during starvation. The polypeptide is Ribonuclease PH (Tolumonas auensis (strain DSM 9187 / NBRC 110442 / TA 4)).